The following is a 71-amino-acid chain: Large ribosomal subunit protein bL31 (71 aa).

Residues C16, C18, C37, and C40 each contribute to the Zn(2+) site.

Belongs to the bacterial ribosomal protein bL31 family. Type A subfamily. As to quaternary structure, part of the 50S ribosomal subunit. It depends on Zn(2+) as a cofactor.

Functionally, binds the 23S rRNA. The chain is Large ribosomal subunit protein bL31 from Pseudomonas entomophila (strain L48).